The primary structure comprises 196 residues: Transmembrane protein 126A (196 aa).

The Mitochondrial matrix portion of the chain corresponds to 1–34; the sequence is MENHKSNNTKENITIVDISRKINQLPEAERNLLE. A helical transmembrane segment spans residues 35–55; that stretch reads HGSVYVGLNAALCGLIANSLF. The Mitochondrial intermembrane portion of the chain corresponds to 56-57; that stretch reads RR. A helical membrane pass occupies residues 58–78; sequence ILNVTKARIAAGLPMAWIPFL. The Mitochondrial matrix segment spans residues 79-107; it reads TTDITYRCFVSFPLNTGDLDCETCTITRS. Residues 108–128 traverse the membrane as a helical segment; the sequence is GLIGLVIGGLYPVFLAIPVNG. Residues 129 to 159 lie on the Mitochondrial intermembrane side of the membrane; sequence GLAARYQSALLPHKGNILSYWIRTSKPVFRK. A helical membrane pass occupies residues 160 to 176; that stretch reads MLFPIMLQTMFSAYLGS. At 177-196 the chain is on the mitochondrial matrix side; that stretch reads EQYKLLIKALQLSEPGKEIH.

This sequence belongs to the TMEM126 family. As to quaternary structure, interacts with OXA1L; promoting cotranslational quality control in mitochondria.

The protein resides in the mitochondrion inner membrane. Its function is as follows. Protein required for the cotranslational protein quality control in the inner membrane of the mitochondria. Associates with newly synthesized polypeptides and may act as a chaperone that cooperates with OXA1L for the insertion of newly synthesized mitochondrial proteins into the inner membrane. Required for the assembly of the ND4 module of mitochondrial complex I. The polypeptide is Transmembrane protein 126A (TMEM126A) (Pongo abelii (Sumatran orangutan)).